Reading from the N-terminus, the 127-residue chain is Histone H2B.2 (127 aa).

Residues 1–35 form a disordered region; the sequence is MAPKAEKKPASKAPAAKKTTASTDASKKRTKTRKE. N6-acetyllysine; alternate is present on residues lysine 7 and lysine 8. Residues lysine 7 and lysine 8 each participate in a glycyl lysine isopeptide (Lys-Gly) (interchain with G-Cter in SUMO); alternate cross-link. Residue serine 11 is modified to Phosphoserine. Residues 11-24 are compositionally biased toward low complexity; that stretch reads SKAPAAKKTTASTD. Lysine 12 bears the N6-acetyllysine mark. Residue lysine 120 forms a Glycyl lysine isopeptide (Lys-Gly) (interchain with G-Cter in ubiquitin) linkage.

Belongs to the histone H2B family. In terms of assembly, the nucleosome is a histone octamer containing two molecules each of H2A, H2B, H3 and H4 assembled in one H3-H4 heterotetramer and two H2A-H2B heterodimers. The octamer wraps approximately 147 bp of DNA. Monoubiquitinated by the UBC2-BRE1 complex to form H2BK123ub1. H2BK123ub1 gives a specific tag for epigenetic transcriptional activation and is also prerequisite for H3K4me and H3K79me formation. H2BK123ub1 also modulates the formation of double-strand breaks during meiosis and is a prerequisite for DNA-damage checkpoint activation. Post-translationally, phosphorylated by STE20 to form H2BS10ph during progression through meiotic prophase. May be correlated with chromosome condensation. In terms of processing, acetylation of N-terminal lysines and particularly formation of H2BK11ac has a positive effect on transcription. Sumoylation to form H2BK6su or H2BK7su occurs preferentially near the telomeres and represses gene transcription.

It is found in the nucleus. The protein localises to the chromosome. Core component of nucleosome. Nucleosomes wrap and compact DNA into chromatin, limiting DNA accessibility to the cellular machineries which require DNA as a template. Histones thereby play a central role in transcription regulation, DNA repair, DNA replication and chromosomal stability. DNA accessibility is regulated via a complex set of post-translational modifications of histones, also called histone code, and nucleosome remodeling. This is Histone H2B.2 (HTB2) from Eremothecium gossypii (strain ATCC 10895 / CBS 109.51 / FGSC 9923 / NRRL Y-1056) (Yeast).